We begin with the raw amino-acid sequence, 396 residues long: Elongation factor Tu 1 (396 aa).

Residues 10-206 (KPHVNVGTIG…ALDTYIPTPE (197 aa)) enclose the tr-type G domain. Residues 19-26 (GHVDHGKT) form a G1 region. A GTP-binding site is contributed by 19–26 (GHVDHGKT). Thr26 contributes to the Mg(2+) binding site. A G2 region spans residues 60-64 (GITIN). The tract at residues 81 to 84 (DCPG) is G3. Residues 81-85 (DCPGH) and 136-139 (NKAD) each bind GTP. The segment at 136-139 (NKAD) is G4. The interval 174 to 176 (SAK) is G5.

It belongs to the TRAFAC class translation factor GTPase superfamily. Classic translation factor GTPase family. EF-Tu/EF-1A subfamily. In terms of assembly, monomer.

It is found in the cytoplasm. The enzyme catalyses GTP + H2O = GDP + phosphate + H(+). In terms of biological role, GTP hydrolase that promotes the GTP-dependent binding of aminoacyl-tRNA to the A-site of ribosomes during protein biosynthesis. The polypeptide is Elongation factor Tu 1 (Methylobacillus flagellatus (strain ATCC 51484 / DSM 6875 / VKM B-1610 / KT)).